A 199-amino-acid polypeptide reads, in one-letter code: Recombination protein RecR (199 aa).

The C4-type zinc-finger motif lies at Cys-57–Cys-72. In terms of domain architecture, Toprim spans Ser-80 to Pro-174.

The protein belongs to the RecR family.

Functionally, may play a role in DNA repair. It seems to be involved in an RecBC-independent recombinational process of DNA repair. It may act with RecF and RecO. This Acidithiobacillus ferrooxidans (strain ATCC 23270 / DSM 14882 / CIP 104768 / NCIMB 8455) (Ferrobacillus ferrooxidans (strain ATCC 23270)) protein is Recombination protein RecR.